The primary structure comprises 621 residues: uncharacterized protein (621 aa).

2 disordered regions span residues 92–134 and 268–310; these read FRNS…QINQ and KINH…DDEI. The span at 94–134 shows a compositional bias: low complexity; it reads NSSNQSSQSNQVNQSNQSSPSSQISPSSQVNKFNQSSQINQ. The segment covering 296–310 has biased composition (acidic residues); it reads TNDETNDETDNDDEI. Residues 354–401 adopt a coiled-coil conformation; the sequence is ANKIQNKIIQIVETLNAYKNKQSQIAIEAKNKIKHITVSNKEVSENIE.

This is an uncharacterized protein from Acanthamoeba polyphaga mimivirus (APMV).